Here is a 401-residue protein sequence, read N- to C-terminus: Odorant receptor 88a (401 aa).

Topologically, residues 1–26 (MKPTEIKKPYRMEEFLRPQMFQEVAQ) are cytoplasmic. Residues 27–47 (MVHFQWRRNPVDNSMVNASMV) form a helical membrane-spanning segment. The Extracellular segment spans residues 48-52 (PFCLS). Residues 53–73 (AFLNVLFFGCNGWDIIGHFWL) form a helical membrane-spanning segment. At 74–142 (GHPANQNPPV…NFWQRYRFIR (69 aa)) the chain is on the cytoplasmic side. A helical transmembrane segment spans residues 143-163 (IYSHLGGPMFCVVPLALFLLT). Over 164-191 (HEGKDTPVAQHEQLLGGWLPCGVRKDPN) the chain is Extracellular. A helical transmembrane segment spans residues 192–212 (FYLLVWSFDLMCTTCGVSFFV). Residues 213 to 277 (TFDNLFNVMQ…LCRKYNDIFK (65 aa)) are Cytoplasmic-facing. A helical transmembrane segment spans residues 278–298 (VAFLVSNFVGAGSLCFYLFML). Topologically, residues 299 to 303 (SETSD) are extracellular. The chain crosses the membrane as a helical span at residues 304–324 (VLIIAQYILPTLVLVGFTFEI). Residues 325–370 (CLRGTQLEKASEGLESSLRSQEWYLGSRRYRKFYLLWTQYCQRTQQ) are Cytoplasmic-facing. Residues 371 to 391 (LGAFGLIQVNMVHFTEIMQLA) form a helical membrane-spanning segment. The Extracellular portion of the chain corresponds to 392–401 (YRLFTFLKSH).

This sequence belongs to the insect chemoreceptor superfamily. Heteromeric odorant receptor channel (TC 1.A.69) family. Or49a subfamily. As to quaternary structure, interacts with Orco. Complexes exist early in the endomembrane system in olfactory sensory neurons (OSNs), coupling these complexes to the conserved ciliary trafficking pathway. As to expression, expressed in olfactory sensory neurons in the antenna.

Its subcellular location is the cell membrane. Functionally, odorant receptor which mediates acceptance or avoidance behavior, depending on its substrates. The odorant receptor repertoire encodes a large collection of odor stimuli that vary widely in identity, intensity, and duration. May form a complex with Orco to form odorant-sensing units, providing sensitive and prolonged odorant signaling and calcium permeability. In Drosophila melanogaster (Fruit fly), this protein is Odorant receptor 88a (Or88a).